Consider the following 450-residue polypeptide: tRNA modification GTPase MnmE (450 aa).

3 residues coordinate (6S)-5-formyl-5,6,7,8-tetrahydrofolate: Arg-20, Glu-78, and Lys-117. One can recognise a TrmE-type G domain in the interval 211–372; it reads GFRMVIVGKP…LEEAIYRETQ (162 aa). K(+) is bound at residue Asn-221. GTP-binding positions include 221–226, 240–246, and 265–268; these read NVGKST, TDIPGTT, and DTAG. Ser-225 is a binding site for Mg(2+). K(+) contacts are provided by Thr-240, Ile-242, and Thr-245. Mg(2+) is bound at residue Thr-246. Residue Lys-450 participates in (6S)-5-formyl-5,6,7,8-tetrahydrofolate binding.

Belongs to the TRAFAC class TrmE-Era-EngA-EngB-Septin-like GTPase superfamily. TrmE GTPase family. In terms of assembly, homodimer. Heterotetramer of two MnmE and two MnmG subunits. The cofactor is K(+).

The protein resides in the cytoplasm. In terms of biological role, exhibits a very high intrinsic GTPase hydrolysis rate. Involved in the addition of a carboxymethylaminomethyl (cmnm) group at the wobble position (U34) of certain tRNAs, forming tRNA-cmnm(5)s(2)U34. The chain is tRNA modification GTPase MnmE from Thermotoga petrophila (strain ATCC BAA-488 / DSM 13995 / JCM 10881 / RKU-1).